Here is a 316-residue protein sequence, read N- to C-terminus: Probable cell division protein WhiA (316 aa).

A DNA-binding region (H-T-H motif) is located at residues 276–309 (SLEELGKIAEPQITKDAIAGRIRRLLQLAEKTEK).

This sequence belongs to the WhiA family.

Functionally, involved in cell division and chromosome segregation. The sequence is that of Probable cell division protein WhiA from Bifidobacterium longum (strain NCC 2705).